The following is a 259-amino-acid chain: Pimeloyl-[acyl-carrier protein] methyl ester esterase (259 aa).

Substrate is bound by residues Trp-18, 78–79 (SL), and 139–143 (FLALD). Residue Ser-78 is the Nucleophile of the active site. Residues Asp-203 and His-231 contribute to the active site. His-231 is a binding site for substrate.

The protein belongs to the AB hydrolase superfamily. Carboxylesterase BioH family. In terms of assembly, monomer.

Its subcellular location is the cytoplasm. It carries out the reaction 6-carboxyhexanoyl-[ACP] methyl ester + H2O = 6-carboxyhexanoyl-[ACP] + methanol + H(+). It functions in the pathway cofactor biosynthesis; biotin biosynthesis. In terms of biological role, the physiological role of BioH is to remove the methyl group introduced by BioC when the pimeloyl moiety is complete. It allows to synthesize pimeloyl-ACP via the fatty acid synthetic pathway through the hydrolysis of the ester bonds of pimeloyl-ACP esters. This chain is Pimeloyl-[acyl-carrier protein] methyl ester esterase, found in Stenotrophomonas maltophilia (strain K279a).